The sequence spans 603 residues: NADH-ubiquinone oxidoreductase chain 5 (603 aa).

17 consecutive transmembrane segments (helical) span residues 4–24, 38–58, 87–107, 114–134, 140–160, 171–191, 210–230, 241–261, 272–292, 301–320, 325–347, 370–390, 407–429, 457–477, 482–502, 537–557, and 582–602; these read YATMTTLALTSLIPPILTTFI, SIVASTFIISLFPTTMFLCLD, MMFIPVALFVTWSIMEFSLWY, INQFFKYLLIFLITMLILVTA, LFIGWEGVGIMSFLLIGWWYA, AILYNRIGDIGFILALAWFLL, LIPLLGFLLAAAGKSAQLGLH, TPVSALLHSSTMVVAGVFLLI, LAQTLTLCLGAITTLFAAVCA, IVAFSTSSQLGLMVATIGIG, AFLHICTHAFFKAMLFMCSGSII, STSLAIGSLALMGMPFLTGFY, WALSIILIATSLTSAYSTRMILL, LTIGSLFAGFFITNNILPTSV, IPLYLKLTALSITLLGLLTAL, IPYLGLLMSQNLPLLLLDLIW, and GLIKLYFLSFFFPLLLILLLI.

This sequence belongs to the complex I subunit 5 family. As to quaternary structure, core subunit of respiratory chain NADH dehydrogenase (Complex I) which is composed of 45 different subunits.

Its subcellular location is the mitochondrion inner membrane. The catalysed reaction is a ubiquinone + NADH + 5 H(+)(in) = a ubiquinol + NAD(+) + 4 H(+)(out). Its function is as follows. Core subunit of the mitochondrial membrane respiratory chain NADH dehydrogenase (Complex I) which catalyzes electron transfer from NADH through the respiratory chain, using ubiquinone as an electron acceptor. Essential for the catalytic activity and assembly of complex I. The chain is NADH-ubiquinone oxidoreductase chain 5 (MT-ND5) from Gorilla gorilla gorilla (Western lowland gorilla).